Here is a 215-residue protein sequence, read N- to C-terminus: Nucleoside triphosphate pyrophosphatase (215 aa).

The active-site Proton acceptor is the Asp77.

This sequence belongs to the Maf family. Requires a divalent metal cation as cofactor.

The protein resides in the cytoplasm. It carries out the reaction a ribonucleoside 5'-triphosphate + H2O = a ribonucleoside 5'-phosphate + diphosphate + H(+). The catalysed reaction is a 2'-deoxyribonucleoside 5'-triphosphate + H2O = a 2'-deoxyribonucleoside 5'-phosphate + diphosphate + H(+). Functionally, nucleoside triphosphate pyrophosphatase. May have a dual role in cell division arrest and in preventing the incorporation of modified nucleotides into cellular nucleic acids. This is Nucleoside triphosphate pyrophosphatase from Rickettsia africae (strain ESF-5).